The sequence spans 368 residues: tRNA-specific 2-thiouridylase MnmA (368 aa).

ATP contacts are provided by residues 24–31 (AMSGGVDS) and leucine 50. Cysteine 117 acts as the Nucleophile in catalysis. An intrachain disulfide couples cysteine 117 to cysteine 213. Glycine 141 is an ATP binding site. The interval 163–165 (KDQ) is interaction with tRNA. Catalysis depends on cysteine 213, which acts as the Cysteine persulfide intermediate.

This sequence belongs to the MnmA/TRMU family.

It localises to the cytoplasm. It carries out the reaction S-sulfanyl-L-cysteinyl-[protein] + uridine(34) in tRNA + AH2 + ATP = 2-thiouridine(34) in tRNA + L-cysteinyl-[protein] + A + AMP + diphosphate + H(+). Its function is as follows. Catalyzes the 2-thiolation of uridine at the wobble position (U34) of tRNA, leading to the formation of s(2)U34. The protein is tRNA-specific 2-thiouridylase MnmA of Wolbachia pipientis subsp. Culex pipiens (strain wPip).